A 794-amino-acid chain; its full sequence is Lon protease (794 aa).

A Lon N-terminal domain is found at 29-222 (VPLLPLRGVL…TLISIIQDEQ (194 aa)). Residue 374-381 (GPPGVGKT) participates in ATP binding. The 182-residue stretch at 610–791 (TDQVGMATGL…DEVLEHALVG (182 aa)) folds into the Lon proteolytic domain. Catalysis depends on residues serine 697 and lysine 740.

Belongs to the peptidase S16 family. Homohexamer. Organized in a ring with a central cavity.

It localises to the cytoplasm. The enzyme catalyses Hydrolysis of proteins in presence of ATP.. Its function is as follows. ATP-dependent serine protease that mediates the selective degradation of mutant and abnormal proteins as well as certain short-lived regulatory proteins. Required for cellular homeostasis and for survival from DNA damage and developmental changes induced by stress. Degrades polypeptides processively to yield small peptide fragments that are 5 to 10 amino acids long. Binds to DNA in a double-stranded, site-specific manner. The chain is Lon protease from Bacillus thuringiensis (strain Al Hakam).